We begin with the raw amino-acid sequence, 498 residues long: MPTPSASSPQPKGFRRAVSEQDTKQAEAVTSPRFIGRRQSLIEDARKEREAAAAAAAAAVASAEPGNPLEAVVFEERDGNAVLNLLFSLRGTKPSSLSRALKVFETFEAKIHHLETRPAQRPLAGSPHLEYFVRFEVPSGDLAALLSSVRRVSDDVRSAREDKVPWFPRKVSELDKCHHLVTKFDPDLDLDHPGFSDQAYRQRRKLIAEIAFQYKQGEPIPHVEYTKEEIATWKEVYATLKGLYATHACREHLEAFQLLERYCGYREDSIPQLEDVSHFLKERTGFQLRPVAGLLSARDFLASLAFRVFQCTQYIRHASSPMHSPEPDCCHELLGHVPMLADRTFAQFSQDIGLASLGASDEEIEKLSTVYWFTVEFGLCKQNGELKAYGAGLLSSYGELLHSLSEEPEVRAFDPDTAAVQPYQDQTYQPVYFVSESFSDAKDKLRNYASRIQRPFSVKFDPYTLAIDVLDSPHTIRRSLEGVQDELHTLTQALSAIS.

Positions 1–10 (MPTPSASSPQ) are enriched in polar residues. Residues 1–33 (MPTPSASSPQPKGFRRAVSEQDTKQAEAVTSPR) are disordered. Phosphoserine occurs at positions 19 and 31. S40 is modified (phosphoserine; by CaMK2 and PKA). Fe cation is bound by residues H331, H336, and E376. S472 carries the phosphoserine modification.

This sequence belongs to the biopterin-dependent aromatic amino acid hydroxylase family. Homotetramer. Interacts (when phosphorylated at Ser-19) with YWHAG; one YWHAG dimer bounds to one TH tetramer and this interaction may influence the phosphorylation and dephosphorylation of other sites. Interacts with NT5DC2; the interaction results in reduced phosphorylation and decreased catalytic activity of TH. It depends on Fe(2+) as a cofactor. Phosphorylated on Ser-19, Ser-31 and Ser-40 by several protein kinases with different site specificities. Phosphorylation at Ser-31 and Ser-40 leads to an increase of TH activity. Phosphorylation at Ser-40 activates the enzyme and also counteracts the feedback inhibition of TH by catecholamines. Phosphorylation of Ser-19 and Ser-31 triggers the proteasomal degradation of TH through the ubiquitin-proteasome pathway. Phosphorylation at Ser-31 facilitates transport of TH from the soma to the nerve terminals via the microtubule network. Phosphorylation at Ser-19 induces the high-affinity binding to the 14-3-3 protein YWHAG; this interaction may influence the phosphorylation and dephosphorylation of other sites. Ser-19 increases the phosphorylation at Ser-40 in a hierarchical manner, leading to increased activity. In terms of tissue distribution, expressed in the adrenal gland. Expressed in the retina. Expressed in the in the striatum (at protein level).

Its subcellular location is the cytoplasm. It localises to the perinuclear region. It is found in the nucleus. The protein resides in the cell projection. The protein localises to the axon. Its subcellular location is the cytoplasmic vesicle. It localises to the secretory vesicle. It is found in the synaptic vesicle. It carries out the reaction (6R)-L-erythro-5,6,7,8-tetrahydrobiopterin + L-tyrosine + O2 = (4aS,6R)-4a-hydroxy-L-erythro-5,6,7,8-tetrahydrobiopterin + L-dopa. It functions in the pathway catecholamine biosynthesis; dopamine biosynthesis; dopamine from L-tyrosine: step 1/2. Inhibited in feedback fashion by the catecholamine neurotransmitters, especially by dopamine in competition with tetrahydrobiopterin. Phosphorylation of several Ser/Thr residues in the N-terminus regulates the catalytic activity. Ser-31 and Ser-40 are readily phosphorylated to activate the catalytic activity. A Cysteine modification induced by N-ethylmaleimide (NEM), inhibits tyrosine 3-monooxygenase activity through the modification of the Cys-177. In terms of biological role, catalyzes the conversion of L-tyrosine to L-dihydroxyphenylalanine (L-Dopa), the rate-limiting step in the biosynthesis of catecholamines, dopamine, noradrenaline, and adrenaline. Uses tetrahydrobiopterin and molecular oxygen to convert tyrosine to L-Dopa. In addition to tyrosine, is able to catalyze the hydroxylation of phenylalanine and tryptophan with lower specificity. Positively regulates the regression of retinal hyaloid vessels during postnatal development. This Mus musculus (Mouse) protein is Tyrosine 3-monooxygenase (Th).